A 529-amino-acid polypeptide reads, in one-letter code: Peptide chain release factor 3 (529 aa).

The 270-residue stretch at 11–280 (SKRRTFAIIS…GLTDWAPAPL (270 aa)) folds into the tr-type G domain. Residues 20–27 (SHPDAGKT), 88–92 (DTPGH), and 142–145 (NKLD) contribute to the GTP site.

It belongs to the TRAFAC class translation factor GTPase superfamily. Classic translation factor GTPase family. PrfC subfamily.

The protein resides in the cytoplasm. In terms of biological role, increases the formation of ribosomal termination complexes and stimulates activities of RF-1 and RF-2. It binds guanine nucleotides and has strong preference for UGA stop codons. It may interact directly with the ribosome. The stimulation of RF-1 and RF-2 is significantly reduced by GTP and GDP, but not by GMP. The polypeptide is Peptide chain release factor 3 (Vibrio vulnificus (strain YJ016)).